We begin with the raw amino-acid sequence, 190 residues long: Threonylcarbamoyl-AMP synthase (190 aa).

A YrdC-like domain is found at 7–190 (ADAISFIVDV…ALTGELFRQG (184 aa)).

The protein belongs to the SUA5 family. TsaC subfamily.

The protein resides in the cytoplasm. It catalyses the reaction L-threonine + hydrogencarbonate + ATP = L-threonylcarbamoyladenylate + diphosphate + H2O. Its function is as follows. Required for the formation of a threonylcarbamoyl group on adenosine at position 37 (t(6)A37) in tRNAs that read codons beginning with adenine. Catalyzes the conversion of L-threonine, HCO(3)(-)/CO(2) and ATP to give threonylcarbamoyl-AMP (TC-AMP) as the acyladenylate intermediate, with the release of diphosphate. This chain is Threonylcarbamoyl-AMP synthase, found in Cronobacter sakazakii (strain ATCC BAA-894) (Enterobacter sakazakii).